Reading from the N-terminus, the 499-residue chain is Aldehyde dehydrogenase 1 (499 aa).

Residues 164–166, 164–167, 190–193, 223–224, 243–244, 243–248, and 266–268 each bind NAD(+); these read IPW, IPWN, KPAE, GS, GSTKVG, and ELG. The active-site Proton acceptor is E266. The active-site Nucleophile is the C300. Residues 346–350 and 397–399 contribute to the NAD(+) site; these read QQYEK and EIF.

This sequence belongs to the aldehyde dehydrogenase family. In terms of assembly, homotetramer. As to expression, expressed in flowers and disk florets.

It catalyses the reaction an aldehyde + NAD(+) + H2O = a carboxylate + NADH + 2 H(+). It carries out the reaction an aldehyde + NADP(+) + H2O = a carboxylate + NADPH + 2 H(+). The enzyme catalyses octanal + NADP(+) + H2O = octanoate + NADPH + 2 H(+). The catalysed reaction is (1R,3R)-chrysanthemal + NAD(+) + H2O = (1R,3R)-chrysanthemate + NADH + 2 H(+). It catalyses the reaction (1R,3R)-chrysanthemal + NADP(+) + H2O = (1R,3R)-chrysanthemate + NADPH + 2 H(+). It carries out the reaction (E)-hept-2-enal + NADP(+) + H2O = (E)-hept-2-enoate + NADPH + 2 H(+). The enzyme catalyses dodecanal + NADP(+) + H2O = dodecanoate + NADPH + 2 H(+). The catalysed reaction is citral + NADP(+) + H2O = 3,7-dimethylocta-2,6-dienoate + NADPH + 2 H(+). It catalyses the reaction perillyl aldehyde + NADP(+) + H2O = perillate + NADPH + 2 H(+). It carries out the reaction (2E,6E)-farnesal + NADP(+) + H2O = (2E,6E)-farnesoate + NADPH + 2 H(+). The enzyme catalyses (S)-(-)-citronellal + NADP(+) + H2O = (S)-(-)-citronellate + NADPH + 2 H(+). It functions in the pathway isoprenoid biosynthesis. In terms of biological role, component of the monoterpenoid pyrethrins biosynthesis; pyrethrins are widely used plant-derived pesticide. Mediates the conversion of trans-chrysanthemal into trans-chrysanthemic acid. Can also use octanal, hept-2-enal, dodecanal, citral, farnesal, citronellal and perillyl aldehyde as substrates. This is Aldehyde dehydrogenase 1 from Tanacetum cinerariifolium (Dalmatian daisy).